Reading from the N-terminus, the 575-residue chain is DNA mismatch repair protein MutL (575 aa).

The protein belongs to the DNA mismatch repair MutL/HexB family.

In terms of biological role, this protein is involved in the repair of mismatches in DNA. It is required for dam-dependent methyl-directed DNA mismatch repair. May act as a 'molecular matchmaker', a protein that promotes the formation of a stable complex between two or more DNA-binding proteins in an ATP-dependent manner without itself being part of a final effector complex. This is DNA mismatch repair protein MutL from Coxiella burnetii (strain CbuG_Q212) (Coxiella burnetii (strain Q212)).